Here is a 203-residue protein sequence, read N- to C-terminus: tRNA (pseudouridine(54)-N(1))-methyltransferase (203 aa).

Residues Leu-125, Gly-146, and Cys-179 each contribute to the S-adenosyl-L-methionine site.

Belongs to the methyltransferase superfamily. TrmY family. As to quaternary structure, homodimer.

It is found in the cytoplasm. It carries out the reaction pseudouridine(54) in tRNA + S-adenosyl-L-methionine = N(1)-methylpseudouridine(54) in tRNA + S-adenosyl-L-homocysteine + H(+). Its function is as follows. Specifically catalyzes the N1-methylation of pseudouridine at position 54 (Psi54) in tRNAs. The chain is tRNA (pseudouridine(54)-N(1))-methyltransferase from Methanopyrus kandleri (strain AV19 / DSM 6324 / JCM 9639 / NBRC 100938).